A 379-amino-acid polypeptide reads, in one-letter code: Transcription termination factor 1a, mitochondrial (379 aa).

Residues 1–37 constitute a mitochondrion transit peptide; sequence MASRNIWCVRRNFLFDLRDWMLQYSAEVFLKSISFRP. 5 interaction with DNA regions span residues 151–152, 229–233, 306–313, 337–340, and 366–373; these read RS, QSTKR, SEKKFNDK, SINT, and SQRRYEAK.

It belongs to the mTERF family. In terms of assembly, monomer. Phosphoprotein with mostly four phosphate groups. While the DNA-binding activity is unaffected by the phosphorylation state, only the phosphorylated form of the protein is active for termination activity. Functioning seems to be regulated by phosphorylation. As to expression, predominantly expressed in heart and liver, with extremely low levels in other tissues. Expressed strongly in the heart and at lower levels in brain, liver and kidney.

The protein resides in the mitochondrion. Transcription termination factor. Binds to a 28 bp region within the tRNA(Leu(uur)) gene at a position immediately adjacent to and downstream of the 16S rRNA gene; this region comprises a tridecamer sequence critical for directing accurate termination. Binds DNA along the major grove and promotes DNA bending and partial unwinding. Promotes base flipping. Transcription termination activity appears to be polarized with highest specificity for transcripts initiated on the light strand. The polypeptide is Transcription termination factor 1a, mitochondrial (Mterf1a) (Mus musculus (Mouse)).